A 185-amino-acid polypeptide reads, in one-letter code: Ribosome-recycling factor (185 aa).

The protein belongs to the RRF family.

The protein resides in the cytoplasm. Responsible for the release of ribosomes from messenger RNA at the termination of protein biosynthesis. May increase the efficiency of translation by recycling ribosomes from one round of translation to another. The chain is Ribosome-recycling factor from Azoarcus sp. (strain BH72).